A 73-amino-acid chain; its full sequence is Putative defensin-like protein 33 (73 aa).

The signal sequence occupies residues 1–25; it reads MASNKVSFIFILFLCVLSTAEFGEA. Cystine bridges form between Cys33–Cys59, Cys45–Cys68, and Cys49–Cys70.

Belongs to the DEFL family.

The protein localises to the secreted. This Arabidopsis thaliana (Mouse-ear cress) protein is Putative defensin-like protein 33.